Consider the following 106-residue polypeptide: uncharacterized protein (106 aa).

The first 27 residues, 1–27, serve as a signal peptide directing secretion; the sequence is MHHFVPSISLFMASVSFSVFFSHLATS. A helical transmembrane segment spans residues 42–62; that stretch reads TLFSMVPLINSSFNLSVFLFF.

It localises to the membrane. This is an uncharacterized protein from Saccharomyces cerevisiae (strain ATCC 204508 / S288c) (Baker's yeast).